Reading from the N-terminus, the 488-residue chain is Envelope glycoprotein gp62 (488 aa).

The N-terminal stretch at 1-20 (MGKFLATLILFFQFCPLILS) is a signal peptide. The Extracellular segment spans residues 21 to 442 (DYSPSCCTLT…LGLSQWAREA (422 aa)). N-linked (GlcNAc...) asparagine; by host glycans are attached at residues Asn-140 and Asn-222. Positions 225–228 (CIVC) match the CXXC motif. Intrachain disulfides connect Cys-225–Cys-228, Cys-225–Cys-401, and Cys-393–Cys-400. N-linked (GlcNAc...) asparagine; by host glycosylation is found at Asn-244 and Asn-272. A fusion peptide region spans residues 313 to 333 (AVPVAVWLVSALAMGAGMAGG). Coiled coils occupy residues 341–387 (ASGR…LLFW) and 397–429 (QEQC…GWGL). An immunosuppression region spans residues 376–392 (AQNRRGLDLLFWEQGGL). A CX6CC motif is present at residues 393–401 (CKALQEQCC). Asn-404 carries N-linked (GlcNAc...) asparagine; by host glycosylation. The chain crosses the membrane as a helical span at residues 443–463 (LQTGITLVALLLLVILAGPCI). Cys-462 carries the S-palmitoyl cysteine; by host lipid modification. Residues 464–488 (LRQLRHLPSRVRYPHYSLINPESSL) are Cytoplasmic-facing.

As to quaternary structure, the mature envelope protein (Env) consists of a trimer of SU-TM heterodimers attached by a labile interchain disulfide bond. In terms of processing, specific enzymatic cleavages in vivo yield mature proteins. Envelope glycoproteins are synthesized as an inactive precursor that is N-glycosylated and processed likely by host cell furin or by a furin-like protease in the Golgi to yield the mature SU and TM proteins. The cleavage site between SU and TM requires the minimal sequence [KR]-X-[KR]-R. The CXXC motif is highly conserved across a broad range of retroviral envelope proteins. It is thought to participate in the formation of a labile disulfide bond possibly with the CX6CC motif present in the transmembrane protein. Isomerization of the intersubunit disulfide bond to an SU intrachain disulfide bond is thought to occur upon receptor recognition in order to allow membrane fusion. Post-translationally, the transmembrane protein is palmitoylated.

It localises to the virion membrane. Its subcellular location is the host cell membrane. In terms of biological role, the surface protein (SU) attaches the virus to the host cell by binding to its receptor. This interaction triggers the refolding of the transmembrane protein (TM) and is thought to activate its fusogenic potential by unmasking its fusion peptide. Fusion occurs at the host cell plasma membrane. The transmembrane protein (TM) acts as a class I viral fusion protein. Under the current model, the protein has at least 3 conformational states: pre-fusion native state, pre-hairpin intermediate state, and post-fusion hairpin state. During viral and target cell membrane fusion, the coiled coil regions (heptad repeats) assume a trimer-of-hairpins structure, positioning the fusion peptide in close proximity to the C-terminal region of the ectodomain. The formation of this structure appears to drive apposition and subsequent fusion of viral and target cell membranes. Membranes fusion leads to delivery of the nucleocapsid into the cytoplasm. The sequence is that of Envelope glycoprotein gp62 (env) from Human T-cell leukemia virus 1 (isolate Zaire EL subtype B) (HTLV-1).